We begin with the raw amino-acid sequence, 1073 residues long: Duffy receptor alpha form (1073 aa).

The first 21 residues, 1-21 (MEGKKKRPLFFLLVLLLSHKA), serve as a signal peptide directing secretion. Residues 22 to 1007 (NNVLFERMNG…YECFTKGSST (986 aa)) are Extracellular-facing. 3 N-linked (GlcNAc...) asparagine glycosylation sites follow: asparagine 134, asparagine 179, and asparagine 202. 2 disulfides stabilise this stretch: cysteine 214–cysteine 243 and cysteine 227–cysteine 234. N-linked (GlcNAc...) asparagine glycans are attached at residues asparagine 252 and asparagine 348. 4 cysteine pairs are disulfide-bonded: cysteine 297/cysteine 374, cysteine 412/cysteine 429, cysteine 424/cysteine 504, and cysteine 433/cysteine 502. A disordered region spans residues 517–915 (VKNVGSGVES…LNNRKLNRDQ (399 aa)). Residues 528-543 (AASSNPITEAVKSSSG) are compositionally biased toward polar residues. Positions 546 to 561 (KVQEDSAHKSVNKGEG) are enriched in basic and acidic residues. A compositionally biased stretch (polar residues) spans 562-576 (KSSTNEADPGSQSGA). Basic and acidic residues-rich tracts occupy residues 675–710 (GEVHNGTDTEPKEDGEKADPQKDIEVKGKQDTDDRS) and 717–734 (HTDERATLGETHMEKDTE). N-linked (GlcNAc...) asparagine glycosylation is present at asparagine 679. Over residues 736–766 (AGGSTLTPEQNVSVASDNGNVPGSGNKQNEG) the composition is skewed to polar residues. N-linked (GlcNAc...) asparagine glycosylation is found at asparagine 746, asparagine 779, and asparagine 788. Residues 799 to 810 (GNEKDFQKHDFM) are compositionally biased toward basic and acidic residues. Low complexity-rich tracts occupy residues 821-843 (SDHTSSDQTSSDHTSSDQTSSDH) and 851-864 (SDQTSSDQTSSDQT). Residues 867 to 891 (TEGHHRDNVRNPEIKSSEDMSKGDF) show a composition bias toward basic and acidic residues. Over residues 893–909 (RNSNSNELYSHNNLNNR) the composition is skewed to polar residues. A helical transmembrane segment spans residues 1008–1029 (GIVYFATGGAFLIILLLFASWN). Residues 1030 to 1073 (AASNDYEEEATFDEFVEYSDDIHRTPLMPNDIEHMQQFTPLDYS) are Cytoplasmic-facing.

In terms of assembly, interacts (via region II) with human ACKR1 (via N-terminal extracellular domain). Interacts (via region II) with rhesus macaque ACKR1 (via N-terminal extracellular domain).

Its subcellular location is the cell membrane. The protein localises to the cytoplasmic vesicle. It is found in the secretory vesicle. It localises to the microneme. Functionally, binds to the human erythrocyte Duffy blood group determinant (ACKR1). Binds to the rhesus macaque erythrocyte Duffy blood group determinant (ACKR1). This chain is Duffy receptor alpha form, found in Plasmodium knowlesi.